Here is a 389-residue protein sequence, read N- to C-terminus: Succinate--CoA ligase [ADP-forming] subunit beta (389 aa).

The region spanning 9 to 244 is the ATP-grasp domain; sequence KEILRKFGVA…LDEEDPAEVE (236 aa). Residues Lys-46, 53–55, Glu-99, Ala-102, and Glu-107 each bind ATP; that span reads GRG. Positions 199 and 213 each coordinate Mg(2+). Substrate-binding positions include Asn-264 and 321–323; that span reads GIM.

This sequence belongs to the succinate/malate CoA ligase beta subunit family. In terms of assembly, heterotetramer of two alpha and two beta subunits. Requires Mg(2+) as cofactor.

It catalyses the reaction succinate + ATP + CoA = succinyl-CoA + ADP + phosphate. The enzyme catalyses GTP + succinate + CoA = succinyl-CoA + GDP + phosphate. The protein operates within carbohydrate metabolism; tricarboxylic acid cycle; succinate from succinyl-CoA (ligase route): step 1/1. Functionally, succinyl-CoA synthetase functions in the citric acid cycle (TCA), coupling the hydrolysis of succinyl-CoA to the synthesis of either ATP or GTP and thus represents the only step of substrate-level phosphorylation in the TCA. The beta subunit provides nucleotide specificity of the enzyme and binds the substrate succinate, while the binding sites for coenzyme A and phosphate are found in the alpha subunit. The protein is Succinate--CoA ligase [ADP-forming] subunit beta of Paraburkholderia phytofirmans (strain DSM 17436 / LMG 22146 / PsJN) (Burkholderia phytofirmans).